Here is a 283-residue protein sequence, read N- to C-terminus: Bis(5'-nucleosyl)-tetraphosphatase, symmetrical (283 aa).

This sequence belongs to the Ap4A hydrolase family.

The catalysed reaction is P(1),P(4)-bis(5'-adenosyl) tetraphosphate + H2O = 2 ADP + 2 H(+). Hydrolyzes diadenosine 5',5'''-P1,P4-tetraphosphate to yield ADP. The polypeptide is Bis(5'-nucleosyl)-tetraphosphatase, symmetrical (Pseudomonas paraeruginosa (strain DSM 24068 / PA7) (Pseudomonas aeruginosa (strain PA7))).